Consider the following 562-residue polypeptide: UPF0649 protein C1442.02 (562 aa).

Phosphoserine occurs at positions 285 and 286. A disordered region spans residues 288–308 (DEEIAKNADVPAEVDNNSTKA).

The protein belongs to the UPF0649 family.

It localises to the cytoplasm. It is found in the nucleus. In Schizosaccharomyces pombe (strain 972 / ATCC 24843) (Fission yeast), this protein is UPF0649 protein C1442.02.